Here is a 291-residue protein sequence, read N- to C-terminus: Trimeric intracellular cation channel type B (291 aa).

Topologically, residues 1–16 (MEYPWDDLTLAFSRTS) are lumenal. Residues 17–33 (MFPFFDIAHYLVSVMAL) form a helical membrane-spanning segment. At 34–47 (KQRPGAVAAAWSNP) the chain is on the cytoplasmic side. A helical transmembrane segment spans residues 48–69 (LSSWLSAMLHCFGGGILSCILL). Residues 70-80 (AEPPLKFLTNH) lie on the Lumenal side of the membrane. Residues 81–99 (TNILLASSIWYIVFFCPRD) form a helical membrane-spanning segment. Topologically, residues 100 to 103 (LVSQ) are cytoplasmic. Residues 104 to 122 (GYSYQPIQLLAAGMKEVTR) form a helical membrane-spanning segment. A 1,2-diacyl-sn-glycero-3-phospho-(1D-myo-inositol-4,5-bisphosphate)-binding residues include K118 and R122. Residues 123–138 (TWKIVGGVAHANGYYR) are Lumenal-facing. The chain crosses the membrane as a helical span at residues 139-156 (NGWIVMIAVGWARGAGGA). Residues 157–179 (IITACEQLLKGDWKPEGDEWLKM) are Cytoplasmic-facing. A helical membrane pass occupies residues 180–197 (SFPCKVTLLGSIMFTFQH). The Lumenal segment spans residues 198 to 206 (TRHLAISKH). The helical transmembrane segment at 207 to 225 (DLMFLYTIFLVTIKVTMMM) threads the bilayer. Over 226–291 (TKDAAVTLTP…SAKRHAKKED (66 aa)) the chain is Cytoplasmic. The interval 254–291 (LSEKKAEVKPSSNGSASSASKRGTEPPSSAKRHAKKED) is disordered. Residues 264–273 (SSNGSASSAS) are compositionally biased toward low complexity.

It belongs to the TMEM38 family. Homotrimer; conformation seems to be controled by binding to diacylglycerol (DAG).

It localises to the endoplasmic reticulum membrane. The enzyme catalyses K(+)(in) = K(+)(out). Channel activity is activated by increased cytosolic Ca(2+) levels and blocked by luminal high Ca(2+) levels. In terms of biological role, intracellular monovalent cation channel required for maintenance of rapid intracellular calcium release. Acts as a potassium counter-ion channel that functions in synchronization with calcium release from intracellular stores. Activated by increased cytosolic Ca(2+) levels. The polypeptide is Trimeric intracellular cation channel type B (Tmem38b) (Rattus norvegicus (Rat)).